The chain runs to 988 residues: Exportin-T (988 aa).

The protein belongs to the exportin family.

It is found in the nucleus. The protein localises to the cytoplasm. TRNA nucleus export receptor which facilitates tRNA translocation across the nuclear pore complex. Involved in pre-tRNA splicing, probably by affecting the interaction of pre-tRNA with splicing endonuclease. The sequence is that of Exportin-T (LOS1) from Lodderomyces elongisporus (strain ATCC 11503 / CBS 2605 / JCM 1781 / NBRC 1676 / NRRL YB-4239) (Yeast).